Here is a 742-residue protein sequence, read N- to C-terminus: Protein-associating with the carboxyl-terminal domain of ezrin (742 aa).

Glycine 2 carries the N-myristoyl glycine lipid modification. In terms of domain architecture, Protein kinase spans 2–245 (GSENSALKSY…LCTLLSHDFF (244 aa)). HEAT repeat units follow at residues 199–238 (ESLLTILNEQVSADVLSSFQQTLHSTLLNPIPKCRPALCT), 285–323 (LIASRLVPLLLNQLVFAEPVAVKSFLPYLLGPKKDHAQG), 333–370 (LFQSRVIPVLLQLFEVHEEHVRMVLLSHIEAYVEHFTQ), and 372–409 (QLKKVILPQVLLGLRDTSDSIVAITLHSLAVLVSLLGP). Serine 439 bears the Phosphoserine mark. Disordered regions lie at residues 506–544 (LSDVKNTSEDSENFPSSSKKSEEWPDWSEPEEPENQTVN), 568–598 (SSWDDCEPSSLDTKVNPGGGITATKPVTSGE), and 629–652 (GDDADQIEPPKVSSQERPLKVPSE). Residues 529-539 (WPDWSEPEEPE) are compositionally biased toward acidic residues. The segment at 548-742 (WPREPCDDVK…GELNWEDNNW (195 aa)) is interaction with EZR. Serine 707 is modified (phosphoserine). Positions 723-742 (EGEAEGWEEEGELNWEDNNW) are disordered.

It belongs to the protein kinase superfamily. In terms of assembly, interacts with EZR/VIL2 C-terminal domain. In terms of processing, may be myristoylated; myristoylation may target it to Golgi compartment. Post-translationally, phosphorylated. As to expression, ubiquitously expressed.

It is found in the cytoplasm. It localises to the golgi apparatus. The protein resides in the cell projection. The protein localises to the lamellipodium. May play a role in regulating cell adhesion/migration complexes in migrating cells. This is Protein-associating with the carboxyl-terminal domain of ezrin (SCYL3) from Homo sapiens (Human).